Here is an 861-residue protein sequence, read N- to C-terminus: Bifunctional uridylyltransferase/uridylyl-removing enzyme (861 aa).

The segment at M1 to R321 is uridylyltransferase. The segment at L322–T678 is uridylyl-removing. One can recognise an HD domain in the interval V440–L562. 2 ACT domains span residues E679–R760 and Q788–Y861.

It belongs to the GlnD family. The cofactor is Mg(2+).

It catalyses the reaction [protein-PII]-L-tyrosine + UTP = [protein-PII]-uridylyl-L-tyrosine + diphosphate. The enzyme catalyses [protein-PII]-uridylyl-L-tyrosine + H2O = [protein-PII]-L-tyrosine + UMP + H(+). Its activity is regulated as follows. Uridylyltransferase (UTase) activity is inhibited by glutamine, while glutamine activates uridylyl-removing (UR) activity. Functionally, modifies, by uridylylation and deuridylylation, the PII regulatory proteins (GlnB and homologs), in response to the nitrogen status of the cell that GlnD senses through the glutamine level. Under low glutamine levels, catalyzes the conversion of the PII proteins and UTP to PII-UMP and PPi, while under higher glutamine levels, GlnD hydrolyzes PII-UMP to PII and UMP (deuridylylation). Thus, controls uridylylation state and activity of the PII proteins, and plays an important role in the regulation of nitrogen assimilation and metabolism. The protein is Bifunctional uridylyltransferase/uridylyl-removing enzyme of Legionella pneumophila subsp. pneumophila (strain Philadelphia 1 / ATCC 33152 / DSM 7513).